A 346-amino-acid chain; its full sequence is Phosphoribosylformylglycinamidine cyclo-ligase (346 aa).

This sequence belongs to the AIR synthase family.

The protein localises to the cytoplasm. It carries out the reaction 2-formamido-N(1)-(5-O-phospho-beta-D-ribosyl)acetamidine + ATP = 5-amino-1-(5-phospho-beta-D-ribosyl)imidazole + ADP + phosphate + H(+). Its pathway is purine metabolism; IMP biosynthesis via de novo pathway; 5-amino-1-(5-phospho-D-ribosyl)imidazole from N(2)-formyl-N(1)-(5-phospho-D-ribosyl)glycinamide: step 2/2. In Vibrio parahaemolyticus serotype O3:K6 (strain RIMD 2210633), this protein is Phosphoribosylformylglycinamidine cyclo-ligase.